We begin with the raw amino-acid sequence, 52 residues long: UPF0181 protein CGSHiGG_01050 (52 aa).

This sequence belongs to the UPF0181 family.

This Haemophilus influenzae (strain PittGG) protein is UPF0181 protein CGSHiGG_01050.